The sequence spans 492 residues: Dipeptide permease D (492 aa).

The next 13 helical transmembrane spans lie at 14–34, 49–69, 91–111, 138–158, 167–187, 212–232, 236–256, 269–289, 312–332, 344–364, 379–399, 413–433, and 458–478; these read VVALQIWEYFSFYGMRALLIL, ALFSAYCSLVYVTPILGGYLA, LVLGASETAPLFLYLSLAIIV, GGFSLMYAAGNIGSIIAPIAC, WAMGFALAAIGMVAGLVIFLC, NWGWLLVLLVTAPLLIAVLFW, SVYALIVATAIGLAVLARIYL, LIVVLTAFSLLFWAFAQQGGS, MFQSINAFAVMLCGMVLAWLV, IWGKFALGLGLMSAGFCILTL, LMVLGLAVMGFAELFIDPVAM, VLTGIYMLLSGAIANYLAGVI, and VFSQITWGALACVGVVLVIWL.

The protein belongs to the major facilitator superfamily. Proton-dependent oligopeptide transporter (POT/PTR) (TC 2.A.17) family. DtpD subfamily.

It is found in the cell inner membrane. In terms of biological role, probable proton-dependent permease that transports dipeptides. This chain is Dipeptide permease D, found in Klebsiella pneumoniae subsp. pneumoniae (strain ATCC 700721 / MGH 78578).